The primary structure comprises 341 residues: N-acetyl-gamma-glutamyl-phosphate reductase (341 aa).

Cys-151 is an active-site residue.

Belongs to the NAGSA dehydrogenase family. Type 1 subfamily.

The protein localises to the cytoplasm. The enzyme catalyses N-acetyl-L-glutamate 5-semialdehyde + phosphate + NADP(+) = N-acetyl-L-glutamyl 5-phosphate + NADPH + H(+). Its pathway is amino-acid biosynthesis; L-arginine biosynthesis; N(2)-acetyl-L-ornithine from L-glutamate: step 3/4. Functionally, catalyzes the NADPH-dependent reduction of N-acetyl-5-glutamyl phosphate to yield N-acetyl-L-glutamate 5-semialdehyde. This is N-acetyl-gamma-glutamyl-phosphate reductase from Chlorobaculum tepidum (strain ATCC 49652 / DSM 12025 / NBRC 103806 / TLS) (Chlorobium tepidum).